A 259-amino-acid polypeptide reads, in one-letter code: 3-hydroxypropionyl-coenzyme A dehydratase (259 aa).

Glutamate 113 acts as the Nucleophile in catalysis. Residue glutamate 133 is the Proton acceptor of the active site.

This sequence belongs to the enoyl-CoA hydratase/isomerase family. In terms of assembly, monomer.

It catalyses the reaction 3-hydroxypropanoyl-CoA = acryloyl-CoA + H2O. Functionally, plays a role in autotrophic carbon fixation via the 3-hydroxypropionate/4-hydroxybutyrate cycle. Catalyzes the reversible dehydration of 3-hydroxypropionyl-CoA to form acryloyl-CoA, and the reversible dehydration of (S)-3-hydroxybutyryl-CoA to form crotonyl-CoA. Inactive towards (R)-3-hydroxybutyryl-CoA. This Metallosphaera sedula (strain ATCC 51363 / DSM 5348 / JCM 9185 / NBRC 15509 / TH2) protein is 3-hydroxypropionyl-coenzyme A dehydratase.